The chain runs to 280 residues: Biotin carboxyl carrier protein of acetyl-CoA carboxylase 1, chloroplastic (280 aa).

Residues 1–82 constitute a chloroplast transit peptide; the sequence is MASSSFSVTS…SNAAKVDGPS (82 aa). The segment covering 52-75 has biased composition (polar residues); it reads PSRSSYPVVKAQSNKVSTGASSNA. Disordered stretches follow at residues 52 to 106 and 164 to 215; these read PSRS…ATEE and QPSY…GTFY. Low complexity predominate over residues 177 to 188; the sequence is PAAAAPAPSTPA. Residues 189-198 are compositionally biased toward pro residues; that stretch reads SLPPPSPPTP. Positions 203–279 constitute a Biotinyl-binding domain; that stretch reads LPTVKSPMAG…SLDTPLFVVQ (77 aa). Lys245 bears the N6-biotinyllysine mark.

In terms of assembly, acetyl-CoA carboxylase is a heterohexamer composed of biotin carboxyl carrier protein, biotin carboxylase and 2 subunits each of ACCase subunit alpha and ACCase plastid-coded subunit beta (accD). As to expression, present in developing tissues from roots, leaves, flowers, siliques and seeds (at protein level).

The protein localises to the plastid. It is found in the chloroplast. Its pathway is lipid metabolism; fatty acid biosynthesis. In terms of biological role, this protein is a component of the acetyl coenzyme A carboxylase complex; first, biotin carboxylase catalyzes the carboxylation of the carrier protein and then the transcarboxylase transfers the carboxyl group to form malonyl-CoA. In Arabidopsis thaliana (Mouse-ear cress), this protein is Biotin carboxyl carrier protein of acetyl-CoA carboxylase 1, chloroplastic (BCCP1).